The following is a 2879-amino-acid chain: Peramine synthetase ppzA (2879 aa).

Positions 1–12 (MTYDEGGHRNNE) are enriched in basic and acidic residues. Positions 1–52 (MTYDEGGHRNNEETPQDVNMSSNNEGMSTSSPTGSYGEIIGQATVSVPQEDQ) are disordered. Residues 16–34 (QDVNMSSNNEGMSTSSPTG) are compositionally biased toward polar residues. Residues 351–747 (QEQCRLQPNT…VGRKDTQVKI (397 aa)) are adenylation 1. One can recognise a Carrier 1 domain in the interval 882–958 (QPLSDMERLL…DLSRQSKYIE (77 aa)). Ser919 is subject to O-(pantetheine 4'-phosphoryl)serine. A condensation region spans residues 997 to 1410 (DAYPCTPLQE…ITILTTEDLE (414 aa)). The interval 1433 to 1827 (DKVQHRPNAP…LSFVRRKDTT (395 aa)) is adenylation 2. Residues 1958 to 2050 (LEIGCGSGMM…KYLVKLIQDI (93 aa)) are methylation (Met) domain. The 79-residue stretch at 2370–2448 (WPTTDTGKEL…RLLLDCCCDD (79 aa)) folds into the Carrier 2 domain. Position 2407 is an O-(pantetheine 4'-phosphoryl)serine (Ser2407). The segment at 2500 to 2817 (TVLLTGANGF…LEDMLQDLDD (318 aa)) is thiesterase (TE) domain.

This sequence belongs to the NRP synthetase family. Pantetheine 4'-phosphate serves as cofactor.

It carries out the reaction (S)-1-pyrroline-5-carboxylate + L-arginine + S-adenosyl-L-methionine + 2 ATP = peramine + 2 AMP + S-adenosyl-L-homocysteine + 2 diphosphate + H2O + 2 H(+). It participates in secondary metabolite biosynthesis. In terms of biological role, nonribosomal peptide synthetase; part of the gene cluster that mediates the biosynthesis of pyrrolopyrazines, secondary metabolites showing insecticidal activity. The single multifunctional NRPS ppzA is responsible for the biosynthesis of peramine. The condensation domain of ppzA is proposed to catalyze formation of a peptide bond between 1-pyrroline-5-carboxylate and arginine. The methylation domain of ppzA would catalyze the N-methylation of the alpha-amino group of arginine. The reductase domain is proposed to be responsible for reduction of the thioester and the cyclization to form an iminium ion resulting in release from the peptide synthetase. Deprotonation of this intermediate and oxidation of the pyrroline ring would give rise to peramine. This final oxidation to give the pyrrole functionality may be spontaneous. In Epichloe species that produce only peramine, the peramine synthetase gene is not localized in a gene cluster, in contrast to Metarhizium species that contain additional pyrrolopyrazine biosynthesis genes. The 2-oxoglutarate-Fe(II) type oxidoreductase ppzC hydroxylates peramine to yield the newly identified compound 8-hydroxyperamine whereas ppzD converts L-proline into trans-4-hydroxy-L-proline, a precursor of peramine biosynthesis. In Metarhizium rileyi (strain RCEF 4871) (Nomuraea rileyi), this protein is Peramine synthetase ppzA.